Consider the following 132-residue polypeptide: D-ribose pyranase (132 aa).

Residue H20 is the Proton donor of the active site. Substrate is bound by residues D28, H99, and 121 to 123 (YAN).

It belongs to the RbsD / FucU family. RbsD subfamily. As to quaternary structure, homodecamer.

It is found in the cytoplasm. The enzyme catalyses beta-D-ribopyranose = beta-D-ribofuranose. Its pathway is carbohydrate metabolism; D-ribose degradation; D-ribose 5-phosphate from beta-D-ribopyranose: step 1/2. Functionally, catalyzes the interconversion of beta-pyran and beta-furan forms of D-ribose. In Chromobacterium violaceum (strain ATCC 12472 / DSM 30191 / JCM 1249 / CCUG 213 / NBRC 12614 / NCIMB 9131 / NCTC 9757 / MK), this protein is D-ribose pyranase.